Reading from the N-terminus, the 552-residue chain is Eukaryotic translation initiation factor 3 subunit D (552 aa).

An RNA gate region spans residues 288–302 (DFDLLTVSETANEPP). A disordered region spans residues 525–552 (LPDGTFSSDEDEEEDDEDEEDEEEDEDN). Positions 532–552 (SDEDEEEDDEDEEDEEEDEDN) are enriched in acidic residues.

It belongs to the eIF-3 subunit D family. In terms of assembly, component of the eukaryotic translation initiation factor 3 (eIF-3) complex, which is composed of 13 subunits: eif3a, eif3b, eif3c, eif3d, eif3e, eif3f, eif3g, eif3h, eif3i, eif3j, eif3k, eif3l and eif3m.

It localises to the cytoplasm. Its function is as follows. mRNA cap-binding component of the eukaryotic translation initiation factor 3 (eIF-3) complex, which is involved in protein synthesis of a specialized repertoire of mRNAs and, together with other initiation factors, stimulates binding of mRNA and methionyl-tRNAi to the 40S ribosome. The eIF-3 complex specifically targets and initiates translation of a subset of mRNAs involved in cell proliferation. In the eIF-3 complex, eif3d specifically recognizes and binds the 7-methylguanosine cap of a subset of mRNAs. The sequence is that of Eukaryotic translation initiation factor 3 subunit D (eif3d) from Danio rerio (Zebrafish).